Consider the following 227-residue polypeptide: UPF0758 protein lpl2409 (227 aa).

The MPN domain occupies 102-225 (RLSNTQQTYA…YSIFAENKWA (124 aa)). Residues His-173, His-175, and Asp-186 each coordinate Zn(2+). Positions 173–186 (HNHPSGLSDASQQD) match the JAMM motif motif.

The protein belongs to the UPF0758 family.

The sequence is that of UPF0758 protein lpl2409 from Legionella pneumophila (strain Lens).